Consider the following 958-residue polypeptide: SLIT and NTRK-like protein 5 (958 aa).

A signal peptide spans 1–40; that stretch reads MHTCCPPVTLEQDLHRKMHSWMLQTLAFAVTSLVLSCAET. The Extracellular segment spans residues 41 to 664; the sequence is IDYYGEICDN…GGGASSVPLS (624 aa). 6 LRR repeats span residues 82-103, 106-127, 130-151, 154-175, 178-199, and 201-222; these read PIYH…EFVN, GASI…AFHG, GLRR…TFLG, NLEY…AFGK, LLQV…LFRF, and PLTH…GLLQ. Asparagine 103 is a glycosylation site (N-linked (GlcNAc...) asparagine). The 52-residue stretch at 235–286 folds into the LRRCT 1 domain; that stretch reads NPWNCSCELISLKDWLDSISYSALVGDVVCETPFRLHGRDLDEVSKQELCPR. A disordered region spans residues 317 to 358; the sequence is ATSSSAVYKPPLKPPKGTRQPNKPRVRPTSRQPSKDLGYSNY. In terms of domain architecture, LRRNT spans 365 to 407; it reads QTKSPVPLECPTACSCNLQISDLGLNVNCQERKIESIAELQPK. LRR repeat units lie at residues 410 to 431, 434 to 455, 458 to 479, 482 to 503, 506 to 527, and 529 to 550; these read NPKK…DFLE, GLDL…AFGD, NLRR…LFYG, SLQY…TFDP, NLQL…VFSG, and TLLR…GVLD. Positions 563–614 constitute an LRRCT 2 domain; it reads NPWDCTCDIVGMKLWVEQLKVGVLVDEVICKAPKKFAETDMRSIKSELLCPD. Asparagine 644 carries an N-linked (GlcNAc...) asparagine glycan. Residues 665 to 685 form a helical membrane-spanning segment; that stretch reads VLILSLLLVFIMSVFVAAGLF. Residues 686-958 lie on the Cytoplasmic side of the membrane; that stretch reads VLVMKRRKKN…LEKQTTFSQF (273 aa). A disordered region spans residues 789 to 844; the sequence is NHHLQQQQQPPPPPQQPQQQPPPQLQLQPGEEERRESHHLRSPAYSVSTIEPREDL. A compositionally biased stretch (pro residues) spans 797–812; sequence QPPPPPQQPQQQPPPQ.

This sequence belongs to the SLITRK family. In terms of tissue distribution, expressed predominantly in the cerebral cortex of the brain but also at low levels in the spinal cord and medulla.

The protein localises to the membrane. Functionally, suppresses neurite outgrowth. This is SLIT and NTRK-like protein 5 (SLITRK5) from Homo sapiens (Human).